Consider the following 73-residue polypeptide: MALPNIADARKLGDEELATEILATKQRLFQLRFQQATRRPENPHEFKHARHRLAQLLTVERERQLENSPSEEA.

It belongs to the universal ribosomal protein uL29 family.

In Synechocystis sp. (strain ATCC 27184 / PCC 6803 / Kazusa), this protein is Large ribosomal subunit protein uL29 (rpmC).